The primary structure comprises 471 residues: GTPase Der (471 aa).

EngA-type G domains lie at Pro3–Ser168 and Val178–Ala353. Residues Gly9 to Ser16, Asp56 to Ile60, Asn120 to Glu123, Gly184 to Ser191, Asp231 to Met235, and Asn296 to Asp299 each bind GTP. In terms of domain architecture, KH-like spans Arg354 to Glu438.

This sequence belongs to the TRAFAC class TrmE-Era-EngA-EngB-Septin-like GTPase superfamily. EngA (Der) GTPase family. Associates with the 50S ribosomal subunit.

In terms of biological role, GTPase that plays an essential role in the late steps of ribosome biogenesis. This is GTPase Der from Symbiobacterium thermophilum (strain DSM 24528 / JCM 14929 / IAM 14863 / T).